The following is a 412-amino-acid chain: GTPase Obg (412 aa).

Residues 1-159 enclose the Obg domain; that stretch reads MKFLDQAKIF…RWIWLRLKMI (159 aa). Residues 160–327 enclose the OBG-type G domain; sequence ADAGLVGLPN…ILARLFTHIR (168 aa). GTP contacts are provided by residues 166–173, 191–195, 212–215, 279–282, and 308–310; these read GLPNAGKS, FTTLH, DIPG, NKCD, and SGV. S173 and T193 together coordinate Mg(2+). The interval 335–412 is disordered; the sequence is AVPAASPIFG…ADDEEDDAEE (78 aa). Residues 385 to 412 show a composition bias toward acidic residues; sequence NDGDEVDEDYDDEDLEEVADDEEDDAEE.

Belongs to the TRAFAC class OBG-HflX-like GTPase superfamily. OBG GTPase family. Monomer. The cofactor is Mg(2+).

It localises to the cytoplasm. Its function is as follows. An essential GTPase which binds GTP, GDP and possibly (p)ppGpp with moderate affinity, with high nucleotide exchange rates and a fairly low GTP hydrolysis rate. Plays a role in control of the cell cycle, stress response, ribosome biogenesis and in those bacteria that undergo differentiation, in morphogenesis control. This Paramagnetospirillum magneticum (strain ATCC 700264 / AMB-1) (Magnetospirillum magneticum) protein is GTPase Obg.